The chain runs to 430 residues: Forkhead box protein N2 (430 aa).

Residues 1–47 (MGPATGMTPDKNIESPTAEKVPGLSQTENMGSLPEEVGAARPKASMV) form a disordered region. Residues 108–204 (KPPYSFSLLI…QALKKQPFSS (97 aa)) constitute a DNA-binding region (fork-head). Disordered stretches follow at residues 299 to 326 (NIDP…SVSS) and 338 to 391 (PKNS…EASQ). Positions 355–366 (DDTDIDYEEDTL) are enriched in acidic residues. Over residues 381–390 (HGSKLRKEAS) the composition is skewed to basic and acidic residues.

As to expression, expressed in the developing eye from stage 23. Localized to the prospective retinal layer and a layer of cells lateral to the ventricular zone. At stage 29, expression extends to the branchial arches and the brain. At stage 33/34, expressed in the vagal ganglion. At stage 36, expression in the retina decreases. Not expressed in the eye lens.

It localises to the nucleus. The protein is Forkhead box protein N2 of Xenopus laevis (African clawed frog).